A 261-amino-acid chain; its full sequence is Cytochrome c oxidase subunit 3 (261 aa).

The Mitochondrial matrix portion of the chain corresponds to 1 to 15 (MAHQAHSYHMVDPSP). A helical membrane pass occupies residues 16-34 (WPIFGATAALLTTSGLIMW). Residues 35–40 (FHYNSL) are Mitochondrial intermembrane-facing. A helical membrane pass occupies residues 41–66 (YLLTLGLLSMFLVMIQWWRDIVREST). The Mitochondrial matrix segment spans residues 67–72 (FQGHHT). The chain crosses the membrane as a helical span at residues 73 to 105 (PTVQKGLRYGMILFITSEAFFFLGFFWAFFHSS). Topologically, residues 106–128 (LAPTPELGAQWPPTGINPLNPLE) are mitochondrial intermembrane. Residues 129–152 (VPLLNTAILLASGVTVTWAHHSIT) form a helical membrane-spanning segment. The Mitochondrial matrix segment spans residues 153 to 155 (ESN). The chain crosses the membrane as a helical span at residues 156-183 (RKQAIHALSLTIILGFYFTALQAMEYHE). At 184-190 (ASFSIAD) the chain is on the mitochondrial intermembrane side. The chain crosses the membrane as a helical span at residues 191–223 (GVYGSTFFVATGFHGLHVIIGSSFLTVCLLRLI). Residues 224-232 (KFHFTTNHH) lie on the Mitochondrial matrix side of the membrane. A helical transmembrane segment spans residues 233–256 (FGFEAAAWYWHFVDVIWLFLYMSI). Residues 257–261 (YWWGS) lie on the Mitochondrial intermembrane side of the membrane.

The protein belongs to the cytochrome c oxidase subunit 3 family. Component of the cytochrome c oxidase (complex IV, CIV), a multisubunit enzyme composed of 14 subunits. The complex is composed of a catalytic core of 3 subunits MT-CO1, MT-CO2 and MT-CO3, encoded in the mitochondrial DNA, and 11 supernumerary subunits COX4I, COX5A, COX5B, COX6A, COX6B, COX6C, COX7A, COX7B, COX7C, COX8 and NDUFA4, which are encoded in the nuclear genome. The complex exists as a monomer or a dimer and forms supercomplexes (SCs) in the inner mitochondrial membrane with NADH-ubiquinone oxidoreductase (complex I, CI) and ubiquinol-cytochrome c oxidoreductase (cytochrome b-c1 complex, complex III, CIII), resulting in different assemblies (supercomplex SCI(1)III(2)IV(1) and megacomplex MCI(2)III(2)IV(2)).

It is found in the mitochondrion inner membrane. It carries out the reaction 4 Fe(II)-[cytochrome c] + O2 + 8 H(+)(in) = 4 Fe(III)-[cytochrome c] + 2 H2O + 4 H(+)(out). In terms of biological role, component of the cytochrome c oxidase, the last enzyme in the mitochondrial electron transport chain which drives oxidative phosphorylation. The respiratory chain contains 3 multisubunit complexes succinate dehydrogenase (complex II, CII), ubiquinol-cytochrome c oxidoreductase (cytochrome b-c1 complex, complex III, CIII) and cytochrome c oxidase (complex IV, CIV), that cooperate to transfer electrons derived from NADH and succinate to molecular oxygen, creating an electrochemical gradient over the inner membrane that drives transmembrane transport and the ATP synthase. Cytochrome c oxidase is the component of the respiratory chain that catalyzes the reduction of oxygen to water. Electrons originating from reduced cytochrome c in the intermembrane space (IMS) are transferred via the dinuclear copper A center (CU(A)) of subunit 2 and heme A of subunit 1 to the active site in subunit 1, a binuclear center (BNC) formed by heme A3 and copper B (CU(B)). The BNC reduces molecular oxygen to 2 water molecules using 4 electrons from cytochrome c in the IMS and 4 protons from the mitochondrial matrix. The polypeptide is Cytochrome c oxidase subunit 3 (MT-CO3) (Struthio camelus (Common ostrich)).